The primary structure comprises 434 residues: Histidinol dehydrogenase (434 aa).

The NAD(+) site is built by tyrosine 130, glutamine 188, and asparagine 211. The substrate site is built by serine 237, glutamine 259, and histidine 262. The Zn(2+) site is built by glutamine 259 and histidine 262. Catalysis depends on proton acceptor residues glutamate 326 and histidine 327. Histidine 327, aspartate 360, glutamate 414, and histidine 419 together coordinate substrate. Aspartate 360 provides a ligand contact to Zn(2+). A Zn(2+)-binding site is contributed by histidine 419.

It belongs to the histidinol dehydrogenase family. As to quaternary structure, homodimer. Zn(2+) is required as a cofactor.

It catalyses the reaction L-histidinol + 2 NAD(+) + H2O = L-histidine + 2 NADH + 3 H(+). It functions in the pathway amino-acid biosynthesis; L-histidine biosynthesis; L-histidine from 5-phospho-alpha-D-ribose 1-diphosphate: step 9/9. In terms of biological role, catalyzes the sequential NAD-dependent oxidations of L-histidinol to L-histidinaldehyde and then to L-histidine. The polypeptide is Histidinol dehydrogenase (Salmonella typhi).